We begin with the raw amino-acid sequence, 165 residues long: UPF0262 protein blr1257 (165 aa).

This sequence belongs to the UPF0262 family.

This chain is UPF0262 protein blr1257, found in Bradyrhizobium diazoefficiens (strain JCM 10833 / BCRC 13528 / IAM 13628 / NBRC 14792 / USDA 110).